A 96-amino-acid chain; its full sequence is RNA-binding protein Hfq (96 aa).

The Sm domain maps to 9–68 (DPYLNALRRERIPVSIYLVNGIKLQGQIESFDQFVILLKNTVNQMVYKHAISTVVPARSV). The segment at 65-96 (ARSVSHHNNPQQQQQHSQQTESAAPAAEPQAE) is disordered. The segment covering 70–96 (HHNNPQQQQQHSQQTESAAPAAEPQAE) has biased composition (low complexity).

This sequence belongs to the Hfq family. As to quaternary structure, homohexamer.

RNA chaperone that binds small regulatory RNA (sRNAs) and mRNAs to facilitate mRNA translational regulation in response to envelope stress, environmental stress and changes in metabolite concentrations. Also binds with high specificity to tRNAs. The protein is RNA-binding protein Hfq of Mannheimia succiniciproducens (strain KCTC 0769BP / MBEL55E).